Reading from the N-terminus, the 850-residue chain is Bifunctional uridylyltransferase/uridylyl-removing enzyme (850 aa).

A uridylyltransferase region spans residues 1-317 (MSARPFADLR…LFPVVAPPLP (317 aa)). Positions 318–673 (IDDDFQLRAG…ARLSPAGEGI (356 aa)) are uridylyl-removing. Residues 436-558 (VDEHILTVLR…VGDTRRLDAL (123 aa)) form the HD domain. 2 consecutive ACT domains span residues 674–755 (QVMV…AVQP) and 783–850 (VLSI…GVLG).

The protein belongs to the GlnD family. Requires Mg(2+) as cofactor.

It carries out the reaction [protein-PII]-L-tyrosine + UTP = [protein-PII]-uridylyl-L-tyrosine + diphosphate. The catalysed reaction is [protein-PII]-uridylyl-L-tyrosine + H2O = [protein-PII]-L-tyrosine + UMP + H(+). With respect to regulation, uridylyltransferase (UTase) activity is inhibited by glutamine, while glutamine activates uridylyl-removing (UR) activity. Its function is as follows. Modifies, by uridylylation and deuridylylation, the PII regulatory proteins (GlnB and homologs), in response to the nitrogen status of the cell that GlnD senses through the glutamine level. Under low glutamine levels, catalyzes the conversion of the PII proteins and UTP to PII-UMP and PPi, while under higher glutamine levels, GlnD hydrolyzes PII-UMP to PII and UMP (deuridylylation). Thus, controls uridylylation state and activity of the PII proteins, and plays an important role in the regulation of nitrogen assimilation and metabolism. This Thiobacillus denitrificans (strain ATCC 25259 / T1) protein is Bifunctional uridylyltransferase/uridylyl-removing enzyme.